An 83-amino-acid polypeptide reads, in one-letter code: uncharacterized protein (83 aa).

This sequence belongs to the chlamydial CPn_0710/CT_666/TC_0037 family.

This is an uncharacterized protein from Chlamydia trachomatis serovar D (strain ATCC VR-885 / DSM 19411 / UW-3/Cx).